The following is a 260-amino-acid chain: uncharacterized protein (260 aa).

Positions 1–22 (MKSIKRIGLCISLLILIIFATS) are cleaved as a signal peptide. Cys23 carries N-palmitoyl cysteine lipidation. Cys23 is lipidated: S-diacylglycerol cysteine.

It belongs to the staphylococcal tandem lipoprotein family.

The protein resides in the cell membrane. This is an uncharacterized protein from Staphylococcus aureus (strain N315).